The chain runs to 208 residues: Uridine kinase (208 aa).

12–19 serves as a coordination point for ATP; that stretch reads GGSGGGKT.

Belongs to the uridine kinase family.

Its subcellular location is the cytoplasm. It catalyses the reaction uridine + ATP = UMP + ADP + H(+). It carries out the reaction cytidine + ATP = CMP + ADP + H(+). The protein operates within pyrimidine metabolism; CTP biosynthesis via salvage pathway; CTP from cytidine: step 1/3. It functions in the pathway pyrimidine metabolism; UMP biosynthesis via salvage pathway; UMP from uridine: step 1/1. In Streptococcus equi subsp. equi (strain 4047), this protein is Uridine kinase.